Reading from the N-terminus, the 349-residue chain is tRNA pseudouridine synthase D (349 aa).

Residue F27 participates in substrate binding. The Nucleophile role is filled by D80. Substrate is bound at residue N129. Residues G155–L303 form the TRUD domain. F329 is a binding site for substrate.

Belongs to the pseudouridine synthase TruD family.

It catalyses the reaction uridine(13) in tRNA = pseudouridine(13) in tRNA. In terms of biological role, responsible for synthesis of pseudouridine from uracil-13 in transfer RNAs. This is tRNA pseudouridine synthase D from Shigella sonnei (strain Ss046).